A 234-amino-acid polypeptide reads, in one-letter code: MADQTHVLFVEDDDVIREATQLALERDGFAVTAMPDGLSGLESFRADRPDIALLDVMLPGLDGVSLCRRIRDESTVPVIMLSARADSIDVVLGLEAGADDYVTKPFDGAVLVARIRAVLRRFGHAGGGDRTEGAGAAETGGVLTFGDLEVDTDGMEVRRAGRPVGLTPTEMRLLLEFSSAPGTVLSRDKLLERVWDYGWGGDTRVVDVHVQRLRTKIGQDRIETVRGFGYKLKA.

In terms of domain architecture, Response regulatory spans 6 to 119 (HVLFVEDDDV…VLVARIRAVL (114 aa)). Residue aspartate 55 is modified to 4-aspartylphosphate. A DNA-binding region (ompR/PhoB-type) is located at residues 140-234 (GGVLTFGDLE…VRGFGYKLKA (95 aa)).

Phosphorylated by CseC.

Its subcellular location is the cytoplasm. Member of the two-component regulatory system CseB/CseC involved in the stability of the cell envelope. CseB activates transcription of RNA polymerase sigma-E factor, in response to changes in the cell envelope. The chain is Transcriptional regulatory protein CseB (cseB) from Streptomyces coelicolor (strain ATCC BAA-471 / A3(2) / M145).